Reading from the N-terminus, the 773-residue chain is 3-isopropylmalate dehydratase (773 aa).

Residues cysteine 355, cysteine 415, and cysteine 418 each coordinate [4Fe-4S] cluster.

The protein belongs to the aconitase/IPM isomerase family. As to quaternary structure, monomer. The cofactor is [4Fe-4S] cluster.

It catalyses the reaction (2R,3S)-3-isopropylmalate = (2S)-2-isopropylmalate. It participates in amino-acid biosynthesis; L-leucine biosynthesis; L-leucine from 3-methyl-2-oxobutanoate: step 2/4. In terms of biological role, catalyzes the isomerization between 2-isopropylmalate and 3-isopropylmalate, via the formation of 2-isopropylmaleate. The polypeptide is 3-isopropylmalate dehydratase (LEU1) (Mycosarcoma maydis (Corn smut fungus)).